Consider the following 208-residue polypeptide: MSLFITFEGGEGCGKSTQSKALYRYLKKKGLGCVLTHEPGGSKSGDKITRLLKWSKEEHISPLTELLLFNASRSILIDNVIKPALQDGKIVICDRYTDSTLAYQGYGRGLDLDTVKCVNSLASGGLVPDLTIWLDMDDKAALLRKGELPPDRFESENNGFHQRVRNGFGAIYATEPDRFLKLDASLPQSEIFSRIKQRVTILLGCRNE.

G9–S16 lines the ATP pocket.

This sequence belongs to the thymidylate kinase family.

It catalyses the reaction dTMP + ATP = dTDP + ADP. Phosphorylation of dTMP to form dTDP in both de novo and salvage pathways of dTTP synthesis. This Dehalococcoides mccartyi (strain ATCC BAA-2100 / JCM 16839 / KCTC 5957 / BAV1) protein is Thymidylate kinase.